We begin with the raw amino-acid sequence, 308 residues long: Dioxygenase peniF (308 aa).

Positions 144 and 225 each coordinate Fe cation.

This sequence belongs to the PhyH family. In terms of assembly, homodimer. It depends on Fe cation as a cofactor.

Its function is as follows. Dioxygenase; part of the gene cluster that mediates the biosynthesis of penifulvin A, a potent insecticidal sesquiterpene that features a [5.5.5.6]dioxafenestrane ring. The first step of the pathway is performed by the sesquiterpene cyclase peniA that generates the angular triquinane scaffold silphinene via cyclization of the linear farnesyl pyrophosphate (FPP). The cytochrome P450 monooxygenase peniB and the flavin-dependent monooxygenase peniC then catalyze a series of oxidation reactions to transform silphinene into penifulvin A. The dioxygenases peniD and peniF, as well as the acetyltransferase peniE, do not seem to be involved in the biosynthesis of penifulvin A. This Penicillium patulum (Penicillium griseofulvum) protein is Dioxygenase peniF.